The primary structure comprises 410 residues: Sensor-like histidine kinase SenX3 (410 aa).

2 helical membrane passes run 6 to 26 (ALLL…AVGM) and 46 to 66 (ITVS…AAVV). Residues 164–380 (NVSHELKTPV…TFTLALPALI (217 aa)) enclose the Histidine kinase domain. Phosphohistidine; by autocatalysis is present on His-167. Positions 385–410 (DDERPEQAREPELRSNRSQREEELSR) are disordered.

In terms of processing, autophosphorylated.

Its subcellular location is the cell membrane. It catalyses the reaction ATP + protein L-histidine = ADP + protein N-phospho-L-histidine.. In terms of biological role, member of the two-component regulatory system SenX3/RegX3. Autophosphorylates, and then transfers the phosphate group to RegX3. The polypeptide is Sensor-like histidine kinase SenX3 (Mycobacterium bovis (strain ATCC BAA-935 / AF2122/97)).